A 458-amino-acid polypeptide reads, in one-letter code: tRNA modification GTPase MnmE (458 aa).

(6S)-5-formyl-5,6,7,8-tetrahydrofolate contacts are provided by Arg-22, Glu-84, and Arg-123. Residues 220–379 enclose the TrmE-type G domain; sequence GIATAIIGRP…LEKAIADLFF (160 aa). Asn-230 contacts K(+). GTP is bound by residues 230–235, 249–255, and 274–277; these read NVGKSS, TDIAGTT, and DTAG. Ser-234 is a Mg(2+) binding site. Residues Thr-249, Ile-251, and Thr-254 each contribute to the K(+) site. Thr-255 serves as a coordination point for Mg(2+). Residue Lys-458 coordinates (6S)-5-formyl-5,6,7,8-tetrahydrofolate.

The protein belongs to the TRAFAC class TrmE-Era-EngA-EngB-Septin-like GTPase superfamily. TrmE GTPase family. Homodimer. Heterotetramer of two MnmE and two MnmG subunits. Requires K(+) as cofactor.

It is found in the cytoplasm. Its function is as follows. Exhibits a very high intrinsic GTPase hydrolysis rate. Involved in the addition of a carboxymethylaminomethyl (cmnm) group at the wobble position (U34) of certain tRNAs, forming tRNA-cmnm(5)s(2)U34. The protein is tRNA modification GTPase MnmE of Bacillus cereus (strain ATCC 14579 / DSM 31 / CCUG 7414 / JCM 2152 / NBRC 15305 / NCIMB 9373 / NCTC 2599 / NRRL B-3711).